The sequence spans 489 residues: Glycogen synthase (489 aa).

ADP-alpha-D-glucose is bound at residue lysine 15.

Belongs to the glycosyltransferase 1 family. Bacterial/plant glycogen synthase subfamily.

The enzyme catalyses [(1-&gt;4)-alpha-D-glucosyl](n) + ADP-alpha-D-glucose = [(1-&gt;4)-alpha-D-glucosyl](n+1) + ADP + H(+). Its pathway is glycan biosynthesis; glycogen biosynthesis. Functionally, synthesizes alpha-1,4-glucan chains using ADP-glucose. This Francisella tularensis subsp. novicida (strain U112) protein is Glycogen synthase.